We begin with the raw amino-acid sequence, 385 residues long: AA13 family lytic polysaccharide monooxygenase aasA (385 aa).

The signal sequence occupies residues 1-18 (MKSLLALVAGNLVTAVSG). His19 lines the Cu(2+) pocket. His19 bears the Methylhistidine mark. An N-terminal catalytic module region spans residues 19–248 (HGYLTVPASR…AQVYLHCADI (230 aa)). Intrachain disulfides connect Cys40–Cys43, Cys66–Cys245, Cys102–Cys203, Cys118–Cys145, Cys153–Cys161, Cys167–Cys173, and Cys181–Cys192. Position 109 (His109) interacts with Cu(2+). N-linked (GlcNAc...) asparagine glycosylation occurs at Asn120. A Cu(2+)-binding site is contributed by Tyr242. A disordered region spans residues 254-276 (SGSSPSPTSTTSTATSTTTPSST). Low complexity predominate over residues 256 to 276 (SSPSPTSTTSTATSTTTPSST). The CBM20 domain maps to 278–385 (CASAISIPVT…TTATESGAWR (108 aa)). Asn364 carries an N-linked (GlcNAc...) asparagine glycan.

This sequence belongs to the polysaccharide monooxygenase AA13 family. It depends on Cu(2+) as a cofactor. Post-translationally, the catalytically essential N-terminal histidine His-19 is post-translationally modified by methylation to prevent protonation of the histidine side chain, and protect the critical active site of the enzyme from oxidative damage.

It localises to the secreted. It catalyses the reaction starch + reduced acceptor + O2 = D-glucono-1,5-lactone-terminated malto-oligosaccharides + short-chain malto-oligosaccharides + acceptor + H2O.. Its function is as follows. Starch-active polysaccharide monooxygenase that oxidizes the C1 position of starch substrates, but not in cellulose, chitin, polygalacturonan or esterified pectin, nor with Arabidopsis stem cell walls. Catalysis by LPMOs requires the reduction of the active-site copper from Cu(II) to Cu(I) by a reducing agent and H(2)O(2) or O(2) as a cosubstrate. This chain is AA13 family lytic polysaccharide monooxygenase aasA, found in Emericella nidulans (strain FGSC A4 / ATCC 38163 / CBS 112.46 / NRRL 194 / M139) (Aspergillus nidulans).